A 35-amino-acid polypeptide reads, in one-letter code: Kappa-theraphotoxin-Tb1b (35 aa).

Disulfide bonds link cysteine 3–cysteine 18, cysteine 10–cysteine 23, and cysteine 17–cysteine 30.

The protein belongs to the neurotoxin 10 (Hwtx-1) family. 58 subfamily. As to quaternary structure, monomer. In terms of tissue distribution, expressed by the venom gland.

The protein resides in the secreted. In terms of biological role, low-affinity blocker of Kv4.2/KCND2 voltage-gated potassium channels. Is presumed to shift the voltage-dependence of channel activation to more depolarized potentials and to bind to the S3-S4 linker region of the voltage sensor domain. The protein is Kappa-theraphotoxin-Tb1b of Theraphosa blondi (Goliath birdeating spider).